The chain runs to 143 residues: SsrA-binding protein (143 aa).

Belongs to the SmpB family.

It is found in the cytoplasm. In terms of biological role, required for rescue of stalled ribosomes mediated by trans-translation. Binds to transfer-messenger RNA (tmRNA), required for stable association of tmRNA with ribosomes. tmRNA and SmpB together mimic tRNA shape, replacing the anticodon stem-loop with SmpB. tmRNA is encoded by the ssrA gene; the 2 termini fold to resemble tRNA(Ala) and it encodes a 'tag peptide', a short internal open reading frame. During trans-translation Ala-aminoacylated tmRNA acts like a tRNA, entering the A-site of stalled ribosomes, displacing the stalled mRNA. The ribosome then switches to translate the ORF on the tmRNA; the nascent peptide is terminated with the 'tag peptide' encoded by the tmRNA and targeted for degradation. The ribosome is freed to recommence translation, which seems to be the essential function of trans-translation. The sequence is that of SsrA-binding protein from Mycoplasmopsis synoviae (strain 53) (Mycoplasma synoviae).